The chain runs to 94 residues: MITIKAEVRKDQGKGASRRLRSAGKFPAIVYGGSEAPVSIELDHDSVKNQEAKEGFYGTALILSIDGKEVQVKVQAVQRHVYKPKLTHIDFVRV.

It belongs to the bacterial ribosomal protein bL25 family. Part of the 50S ribosomal subunit; part of the 5S rRNA/L5/L18/L25 subcomplex. Contacts the 5S rRNA. Binds to the 5S rRNA independently of L5 and L18.

Functionally, this is one of the proteins that binds to the 5S RNA in the ribosome where it forms part of the central protuberance. The sequence is that of Large ribosomal subunit protein bL25 from Pectobacterium carotovorum subsp. carotovorum (strain PC1).